The primary structure comprises 130 residues: Organic solute transporter subunit beta (130 aa).

At 1–35 (MNYSEKLTGAPPMTEVPLELLEEMLWFFRVEDATP) the chain is on the extracellular side. The chain crosses the membrane as a helical span at residues 36-56 (WNCSMFVLAALVAIISFILLG). At 57–130 (RNIQANRNQK…HLPDPQEPES (74 aa)) the chain is on the cytoplasmic side. The disordered stretch occupies residues 99 to 130 (LSEKPTLAQGEMEAKCSDVPRVHLPDPQEPES). The span at 110–124 (MEAKCSDVPRVHLPD) shows a compositional bias: basic and acidic residues.

This sequence belongs to the OST-beta family. In terms of assembly, interacts with SLC51A. The Ost-alpha/Ost-beta complex is a heterodimer composed of alpha (SLC51A) and beta (SLC51B) subunit; induces the transport of SLC51A from the endoplasmic reticulum to the plasma membrane.

It is found in the cell membrane. It catalyses the reaction taurocholate(out) = taurocholate(in). The catalysed reaction is estrone 3-sulfate(out) = estrone 3-sulfate(in). The enzyme catalyses dehydroepiandrosterone 3-sulfate(out) = dehydroepiandrosterone 3-sulfate(in). It carries out the reaction tauroursodeoxycholate(out) = tauroursodeoxycholate(in). It catalyses the reaction glycoursodeoxycholate(out) = glycoursodeoxycholate(in). The catalysed reaction is glycocholate(out) = glycocholate(in). The enzyme catalyses taurochenodeoxycholate(out) = taurochenodeoxycholate(in). It carries out the reaction glycochenodeoxycholate(out) = glycochenodeoxycholate(in). It catalyses the reaction taurodeoxycholate(out) = taurodeoxycholate(in). The catalysed reaction is glycodeoxycholate(out) = glycodeoxycholate(in). The enzyme catalyses prostaglandin E2(out) = prostaglandin E2(in). Essential component of the Ost-alpha/Ost-beta complex, a heterodimer that acts as the intestinal basolateral transporter responsible for bile acid export from enterocytes into portal blood. The Ost-alpha/Ost-beta complex efficiently transports the major species of bile acids (taurocholate). Taurine conjugates are transported more efficiently across the basolateral membrane than glycine-conjugated bile acids. Can also transport steroids such as estrone 3-sulfate and dehydroepiandrosterone 3-sulfate, therefore playing a role in the enterohepatic circulation of sterols. Able to transport eicosanoids such as prostaglandin E2. Modulates SLC51A glycosylation, membrane trafficking and stability activities. The protein is Organic solute transporter subunit beta (SLC51B) of Bos taurus (Bovine).